A 174-amino-acid chain; its full sequence is Adenylate kinase (174 aa).

Positions S12–V41 are NMP. Residues T13, R18, G39–V41, G67–R70, and Q74 each bind AMP. Positions G104–D141 are LID. ATP-binding positions include R105 and T114–Y115. AMP is bound by residues R138 and R149.

It belongs to the adenylate kinase family. As to quaternary structure, monomer.

The protein resides in the cytoplasm. The enzyme catalyses AMP + ATP = 2 ADP. Its pathway is purine metabolism; AMP biosynthesis via salvage pathway; AMP from ADP: step 1/1. Catalyzes the reversible transfer of the terminal phosphate group between ATP and AMP. Plays an important role in cellular energy homeostasis and in adenine nucleotide metabolism. The polypeptide is Adenylate kinase (Neisseria cinerea).